The sequence spans 310 residues: Ribosomal protein uL3 glutamine methyltransferase (310 aa).

The protein belongs to the protein N5-glutamine methyltransferase family. PrmB subfamily.

The catalysed reaction is L-glutaminyl-[ribosomal protein uL3] + S-adenosyl-L-methionine = N(5)-methyl-L-glutaminyl-[ribosomal protein uL3] + S-adenosyl-L-homocysteine + H(+). Methylates large ribosomal subunit protein uL3 on a specific glutamine residue. In Vibrio anguillarum (strain ATCC 68554 / 775) (Listonella anguillarum), this protein is Ribosomal protein uL3 glutamine methyltransferase.